Here is a 155-residue protein sequence, read N- to C-terminus: Endoribonuclease YbeY (155 aa).

His114, His118, and His124 together coordinate Zn(2+).

This sequence belongs to the endoribonuclease YbeY family. The cofactor is Zn(2+).

It is found in the cytoplasm. Its function is as follows. Single strand-specific metallo-endoribonuclease involved in late-stage 70S ribosome quality control and in maturation of the 3' terminus of the 16S rRNA. This is Endoribonuclease YbeY from Baumannia cicadellinicola subsp. Homalodisca coagulata.